A 508-amino-acid polypeptide reads, in one-letter code: Histidine ammonia-lyase (508 aa).

Residues Ala143 to Gly145 constitute a cross-link (5-imidazolinone (Ala-Gly)). Ser144 carries the post-translational modification 2,3-didehydroalanine (Ser).

It belongs to the PAL/histidase family. Post-translationally, contains an active site 4-methylidene-imidazol-5-one (MIO), which is formed autocatalytically by cyclization and dehydration of residues Ala-Ser-Gly.

The protein localises to the cytoplasm. The enzyme catalyses L-histidine = trans-urocanate + NH4(+). It participates in amino-acid degradation; L-histidine degradation into L-glutamate; N-formimidoyl-L-glutamate from L-histidine: step 1/3. The polypeptide is Histidine ammonia-lyase (Caldanaerobacter subterraneus subsp. tengcongensis (strain DSM 15242 / JCM 11007 / NBRC 100824 / MB4) (Thermoanaerobacter tengcongensis)).